The chain runs to 138 residues: Small ribosomal subunit protein uS11 (138 aa).

It belongs to the universal ribosomal protein uS11 family. Part of the 30S ribosomal subunit.

Its function is as follows. Located on the platform of the 30S subunit. The sequence is that of Small ribosomal subunit protein uS11 from Pyrobaculum arsenaticum (strain DSM 13514 / JCM 11321 / PZ6).